Consider the following 287-residue polypeptide: MSSNFLHMPMTITMSSQNFQHHDHSSYFASITKDIEAHLKQSIIVKPPFTVYEPMYNLAFTTPPTSAPLLCVAACELVGGHRRQAVAAASSLHLMHVASFTHEHLPLTDRSNPNPMIHHAYNPNIELLIPDAIVPFGCELLTRLDNPIEDDHADRVLKVIVEITRAFGSQGIIDGQFHEKVVNRSNGEEENNNADWIDYTCRKKEGKLYACAATCGAILGGANEEEEEKLSKFGLYVGMIQGYSKIGRGKEEERLKRVEELTKLAIKELEHFKGRRVEEISSIILGP.

Mg(2+) contacts are provided by E103 and D109. Dimethylallyl diphosphate is bound by residues K204, Q241, and K250.

This sequence belongs to the FPP/GGPP synthase family. Part of a heterodimeric geranyl(geranyl)diphosphate synthase. Mg(2+) serves as cofactor. Mainly expressed in trichomes, and, to a lower extent, in roots, leaves, flowers and stems.

The protein resides in the plastid. Its subcellular location is the chloroplast thylakoid membrane. Heterodimeric geranyl(geranyl)-diphosphate (GPP) synthase small subunit. The small subunit alone is inactive in vitro while the large subunit GGPPS1 catalyzes mainly the production of geranygeranyl-diphosphate in vitro. Upon association of the two subunits, the product profile changes and the production of gerany-diphosphate is strongly increased. The polypeptide is Heterodimeric geranylgeranyl pyrophosphate synthase small subunit 2, chloroplastic (Cannabis sativa (Hemp)).